A 475-amino-acid polypeptide reads, in one-letter code: V-type ATP synthase beta chain (475 aa).

It belongs to the ATPase alpha/beta chains family.

Its function is as follows. Produces ATP from ADP in the presence of a proton gradient across the membrane. The V-type beta chain is a regulatory subunit. This Anaeromyxobacter dehalogenans (strain 2CP-C) protein is V-type ATP synthase beta chain.